Reading from the N-terminus, the 445-residue chain is Putrescine hydroxycinnamoyltransferase 1 (445 aa).

Active-site proton acceptor residues include His-154 and Asp-388.

Belongs to the plant acyltransferase family. As to expression, expressed in leaves.

Its function is as follows. Hydroxycinnamoyl transferase that catalyzes the transfer of an acyl from p-coumaryol-CoA to putrescine, to produce coumaroyl putrescine. The protein is Putrescine hydroxycinnamoyltransferase 1 of Oryza sativa subsp. japonica (Rice).